The primary structure comprises 62 residues: Histone H1.2, embryonic (62 aa).

Residues His-1 to Lys-53 enclose the H15 domain.

Belongs to the histone H1/H5 family.

It localises to the nucleus. It is found in the chromosome. Histones H1 are necessary for the condensation of nucleosome chains into higher-order structures. The chain is Histone H1.2, embryonic from Parechinus angulosus (Angulate sea urchin).